We begin with the raw amino-acid sequence, 76 residues long: uncharacterized protein (76 aa).

A helical transmembrane segment spans residues 40–60 (IVLNLVVLVGVVPLTWMFLGQ).

It localises to the membrane. This is an uncharacterized protein from Dictyostelium discoideum (Social amoeba).